The following is a 342-amino-acid chain: Ribosomal RNA small subunit methyltransferase C (342 aa).

This sequence belongs to the methyltransferase superfamily. RsmC family. Monomer.

Its subcellular location is the cytoplasm. The enzyme catalyses guanosine(1207) in 16S rRNA + S-adenosyl-L-methionine = N(2)-methylguanosine(1207) in 16S rRNA + S-adenosyl-L-homocysteine + H(+). Functionally, specifically methylates the guanine in position 1207 of 16S rRNA in the 30S particle. The sequence is that of Ribosomal RNA small subunit methyltransferase C from Shewanella piezotolerans (strain WP3 / JCM 13877).